The primary structure comprises 292 residues: Nitrogenase iron protein 2 (292 aa).

8–15 is an ATP binding site; it reads GKGGIGKS. Residue Cys106 participates in [4Fe-4S] cluster binding. Arg109 is subject to ADP-ribosylarginine; by dinitrogenase reductase ADP-ribosyltransferase. A [4Fe-4S] cluster-binding site is contributed by Cys142.

The protein belongs to the NifH/BchL/ChlL family. Homodimer. [4Fe-4S] cluster is required as a cofactor. Post-translationally, the reversible ADP-ribosylation of Arg-109 inactivates the nitrogenase reductase and regulates nitrogenase activity.

The enzyme catalyses N2 + 8 reduced [2Fe-2S]-[ferredoxin] + 16 ATP + 16 H2O = H2 + 8 oxidized [2Fe-2S]-[ferredoxin] + 2 NH4(+) + 16 ADP + 16 phosphate + 6 H(+). Functionally, the key enzymatic reactions in nitrogen fixation are catalyzed by the nitrogenase complex, which has 2 components: the iron protein and the molybdenum-iron protein. The sequence is that of Nitrogenase iron protein 2 (nifH2) from Methanothermococcus thermolithotrophicus (Methanococcus thermolithotrophicus).